The following is a 266-amino-acid chain: Ribonuclease 3 (266 aa).

Positions 1-35 are disordered; that stretch reads MMDESADIKPVPTSEDVAAPSGTEPVAPAPKKKRA. Positions 43–171 constitute an RNase III domain; that stretch reads MAAIEQRLGH…VIGAVYLDGG (129 aa). Position 84 (Glu84) interacts with Mg(2+). Asp88 is a catalytic residue. Mg(2+) is bound by residues Asp157 and Glu160. The active site involves Glu160. The 70-residue stretch at 196–265 folds into the DRBM domain; sequence DPKTVLQEWA…ASAMIVREGV (70 aa).

This sequence belongs to the ribonuclease III family. Homodimer. Mg(2+) is required as a cofactor.

Its subcellular location is the cytoplasm. The catalysed reaction is Endonucleolytic cleavage to 5'-phosphomonoester.. Digests double-stranded RNA. Involved in the processing of primary rRNA transcript to yield the immediate precursors to the large and small rRNAs (23S and 16S). Processes some mRNAs, and tRNAs when they are encoded in the rRNA operon. Processes pre-crRNA and tracrRNA of type II CRISPR loci if present in the organism. The protein is Ribonuclease 3 of Nitrobacter winogradskyi (strain ATCC 25391 / DSM 10237 / CIP 104748 / NCIMB 11846 / Nb-255).